The following is a 105-amino-acid chain: Small cysteine and glycine repeat-containing protein 10 (105 aa).

Residues 4–41 (CGCGGCGGRCSGGCGGGCGGGCGGGCGGGCGGCGGGCG) are 10 X 2 AA repeats of CG.

The protein belongs to the KRTAP type 28 family.

Its function is as follows. In the hair cortex, hair keratin intermediate filaments are embedded in an interfilamentous matrix, consisting of hair keratin-associated proteins (KRTAP), which are essential for the formation of a rigid and resistant hair shaft through their extensive disulfide bond cross-linking with abundant cysteine residues of hair keratins. The matrix proteins include the high-sulfur and high-glycine-tyrosine keratins. The protein is Small cysteine and glycine repeat-containing protein 10 of Homo sapiens (Human).